Reading from the N-terminus, the 201-residue chain is Dephospho-CoA kinase (201 aa).

Positions 3 to 201 constitute a DPCK domain; that stretch reads ILGLTGGIGS…QIDSRVGCKI (199 aa). 11-16 provides a ligand contact to ATP; that stretch reads GSGKSL.

It belongs to the CoaE family.

The protein resides in the cytoplasm. It carries out the reaction 3'-dephospho-CoA + ATP = ADP + CoA + H(+). It functions in the pathway cofactor biosynthesis; coenzyme A biosynthesis; CoA from (R)-pantothenate: step 5/5. In terms of biological role, catalyzes the phosphorylation of the 3'-hydroxyl group of dephosphocoenzyme A to form coenzyme A. The polypeptide is Dephospho-CoA kinase (Ehrlichia ruminantium (strain Welgevonden)).